The primary structure comprises 189 residues: Mercury resistance operon ORF3 (189 aa).

The tat-type signal signal peptide spans 1–27 (MTSPSPTARRTRLRRRTALALAAAATA). The Thioredoxin domain maps to 38–189 (TKANTPATRA…IQDALKKAGA (152 aa)).

Post-translationally, predicted to be exported by the Tat system. The position of the signal peptide cleavage has not been experimentally proven.

The protein resides in the secreted. Probable mercury binding protein. In Streptomyces lividans, this protein is Mercury resistance operon ORF3.